Here is a 214-residue protein sequence, read N- to C-terminus: Chaperone protein TorD (214 aa).

This sequence belongs to the TorD/DmsD family. TorD subfamily.

The protein resides in the cytoplasm. Functionally, involved in the biogenesis of TorA. Acts on TorA before the insertion of the molybdenum cofactor and, as a result, probably favors a conformation of the apoenzyme that is competent for acquiring the cofactor. This Aeromonas salmonicida (strain A449) protein is Chaperone protein TorD.